The primary structure comprises 311 residues: MIDLLIIAGPTAVGKTDISIKLAEKLNGEIISADSMQIYKYMDIGSAKITKDEMKGIPHHLIDVVEPHEEFNVSSFKALAEESIKDIWNRGKLPIIAGGTGLYINSLIYNYDFTDADRDEKYREYLTKLAEDKGKEYVHSLLKDIDEESYEKLYPNDLKRVVRALEVYKITGKSISEYTKENEKKLYDIPYNVNYFILNMNREVLYERINKRVDIMMGKGLIEEVKKLESMGYTPDMQSMKGIGYKEVLFYLNGDISLDEAIYLIKKGSRNYAKRQLTWFRKDKRSIWIDKDKYNSEEEIVDKIIKMVKDK.

9 to 16 (GPTAVGKT) provides a ligand contact to ATP. 11 to 16 (TAVGKT) is a binding site for substrate. Residues 34 to 37 (DSMQ) form an interaction with substrate tRNA region.

The protein belongs to the IPP transferase family. Monomer. The cofactor is Mg(2+).

The catalysed reaction is adenosine(37) in tRNA + dimethylallyl diphosphate = N(6)-dimethylallyladenosine(37) in tRNA + diphosphate. Catalyzes the transfer of a dimethylallyl group onto the adenine at position 37 in tRNAs that read codons beginning with uridine, leading to the formation of N6-(dimethylallyl)adenosine (i(6)A). The polypeptide is tRNA dimethylallyltransferase (Clostridium botulinum (strain Langeland / NCTC 10281 / Type F)).